A 620-amino-acid chain; its full sequence is Translation initiation factor IF-2 (620 aa).

The 170-residue stretch at 119–288 (ERPPIVTIMG…IILISELENL (170 aa)) folds into the tr-type G domain. Residues 128-135 (GHVDHGKT) are G1. Residue 128-135 (GHVDHGKT) coordinates GTP. The tract at residues 153–157 (GITQA) is G2. Residues 175–178 (DTPG) form a G3 region. GTP is bound by residues 175 to 179 (DTPGH) and 229 to 232 (NKID). The interval 229–232 (NKID) is G4. Residues 265 to 267 (SAI) form a G5 region.

It belongs to the TRAFAC class translation factor GTPase superfamily. Classic translation factor GTPase family. IF-2 subfamily.

It is found in the cytoplasm. Its function is as follows. One of the essential components for the initiation of protein synthesis. Protects formylmethionyl-tRNA from spontaneous hydrolysis and promotes its binding to the 30S ribosomal subunits. Also involved in the hydrolysis of GTP during the formation of the 70S ribosomal complex. The sequence is that of Translation initiation factor IF-2 from Mycoplasma capricolum subsp. capricolum (strain California kid / ATCC 27343 / NCTC 10154).